We begin with the raw amino-acid sequence, 536 residues long: Probable E3 ubiquitin-protein ligase ARI13 (536 aa).

The segment at 83–328 is TRIAD supradomain; that stretch reads KISSCGICFK…GFYKFCNVSM (246 aa). Residues Cys-87, Cys-90, Cys-106, His-108, Cys-111, Cys-114, Cys-135, Cys-140, Cys-180, Cys-185, Cys-210, Cys-212, Cys-217, Cys-220, His-225, Cys-230, Cys-277, Cys-280, Cys-297, Cys-299, Cys-304, Cys-307, His-314, and Cys-324 each coordinate Zn(2+). The RING-type 1 zinc-finger motif lies at 87-140; sequence CGICFKTCDDGDYLISTPFCSHMFCKSCWRKYLEKNFYLVEKTQTRISCPHGAC. Residues 158–230 form an IBR-type zinc finger; it reads EMYVEYILRS…MLESHKPVTC (73 aa). An RING-type 2; atypical zinc finger spans residues 277–307; that stretch reads CPHCLRPADLGTKQYLRFLTCACNGRFCWKC. The RanBP2-type zinc-finger motif lies at 495–526; sequence DYGGLFWLCDRCTYGNTWFHKECLMCSDDIAA.

It belongs to the RBR family. Ariadne subfamily. Requires Zn(2+) as cofactor.

The catalysed reaction is [E2 ubiquitin-conjugating enzyme]-S-ubiquitinyl-L-cysteine + [acceptor protein]-L-lysine = [E2 ubiquitin-conjugating enzyme]-L-cysteine + [acceptor protein]-N(6)-ubiquitinyl-L-lysine.. It participates in protein modification; protein ubiquitination. Might act as an E3 ubiquitin-protein ligase, or as part of E3 complex, which accepts ubiquitin from specific E2 ubiquitin-conjugating enzymes and then transfers it to substrates. The protein is Probable E3 ubiquitin-protein ligase ARI13 (ARI13) of Arabidopsis thaliana (Mouse-ear cress).